A 298-amino-acid chain; its full sequence is Cyclin-dependent kinase 2 homolog (298 aa).

The 281-residue stretch at 4 to 284 (YHKMEKIGEG…AKEALKHDYF (281 aa)) folds into the Protein kinase domain. Residues 10 to 18 (IGEGTYGVV) and Lys-32 each bind ATP. Position 14 is a phosphothreonine (Thr-14). Position 15 is a phosphotyrosine (Tyr-15). The active-site Proton acceptor is the Asp-125. At Thr-158 the chain carries Phosphothreonine.

It belongs to the protein kinase superfamily. CMGC Ser/Thr protein kinase family. CDC2/CDKX subfamily. As to quaternary structure, may form a complex composed of at least the catalytic subunit CRK2 and a cyclin. Requires Mg(2+) as cofactor.

It is found in the cytoplasm. The enzyme catalyses L-seryl-[protein] + ATP = O-phospho-L-seryl-[protein] + ADP + H(+). It catalyses the reaction L-threonyl-[protein] + ATP = O-phospho-L-threonyl-[protein] + ADP + H(+). The catalysed reaction is [DNA-directed RNA polymerase] + ATP = phospho-[DNA-directed RNA polymerase] + ADP + H(+). Its activity is regulated as follows. Phosphorylation at Thr-14 or Tyr-15 inactivates the enzyme, while phosphorylation at Thr-158 activates it. In terms of biological role, serine/threonine-protein kinase. Involved in the control of the cell cycle. Required for entry into S-phase and mitosis. Probable component of the kinase complex that phosphorylates the repetitive C-terminus of RNA polymerase II. This chain is Cyclin-dependent kinase 2 homolog, found in Theileria annulata.